The primary structure comprises 368 residues: Cyclic di-GMP phosphodiesterase TM_0186 (368 aa).

Positions 2-114 constitute a Response regulatory domain; the sequence is TVLIVEDDDI…LLRLKITHAL (113 aa). A 4-aspartylphosphate modification is found at D49. Residues 148-345 form the HD-GYP domain; it reads YEDFLFEVLE…ITDVYRREKD (198 aa). Residues E169, H173, H205, D206, H234, H260, H261, and D289 each coordinate a divalent metal cation. The interval 341–368 is disordered; that stretch reads RREKDEDTSHNGGRSHQSSPGEGVEGIR. The segment covering 350–360 has biased composition (polar residues); sequence HNGGRSHQSSP.

It catalyses the reaction 3',3'-c-di-GMP + 2 H2O = 2 GMP + 2 H(+). With respect to regulation, can function in vivo with either divalent iron or manganese occupying di- and trimetal sites. Dimetal is necessary and sufficient to catalyze conversion of c-di-GMP to pGpG, but conversion of pGpG to GMP requires an occupied trimetal site. Its function is as follows. Phosphodiesterase (PDE) that catalyzes the hydrolysis of cyclic diguanylate (c-di-GMP) to GMP. Hydrolyzes c-di-GMP to GMP in a two-step reaction, via the linear intermediate 5'-phosphoguanylyl(3'-&gt;5')guanosine (pGpG). The protein is Cyclic di-GMP phosphodiesterase TM_0186 of Thermotoga maritima (strain ATCC 43589 / DSM 3109 / JCM 10099 / NBRC 100826 / MSB8).